A 336-amino-acid polypeptide reads, in one-letter code: 3-isopropylmalate dehydrogenase (336 aa).

4 residues coordinate substrate: Arg-87, Arg-97, Arg-121, and Asp-211. Mg(2+)-binding residues include Asp-211, Asp-235, and Asp-239. Residue 271–283 coordinates NAD(+); sequence GSAPDIAGQGIAD.

The protein belongs to the isocitrate and isopropylmalate dehydrogenases family. LeuB type 2 subfamily. Homodimer. Requires Mg(2+) as cofactor. Mn(2+) serves as cofactor.

It is found in the cytoplasm. It carries out the reaction (2R,3S)-3-isopropylmalate + NAD(+) = 4-methyl-2-oxopentanoate + CO2 + NADH. Its pathway is amino-acid biosynthesis; L-leucine biosynthesis; L-leucine from 3-methyl-2-oxobutanoate: step 3/4. Functionally, catalyzes the oxidation of 3-carboxy-2-hydroxy-4-methylpentanoate (3-isopropylmalate) to 3-carboxy-4-methyl-2-oxopentanoate. The product decarboxylates to 4-methyl-2 oxopentanoate. This Rhodococcus jostii (strain RHA1) protein is 3-isopropylmalate dehydrogenase.